A 135-amino-acid chain; its full sequence is Ribosome-binding factor A (135 aa).

The protein belongs to the RbfA family. Monomer. Binds 30S ribosomal subunits, but not 50S ribosomal subunits or 70S ribosomes.

It is found in the cytoplasm. In terms of biological role, one of several proteins that assist in the late maturation steps of the functional core of the 30S ribosomal subunit. Associates with free 30S ribosomal subunits (but not with 30S subunits that are part of 70S ribosomes or polysomes). Required for efficient processing of 16S rRNA. May interact with the 5'-terminal helix region of 16S rRNA. The polypeptide is Ribosome-binding factor A (Bartonella henselae (strain ATCC 49882 / DSM 28221 / CCUG 30454 / Houston 1) (Rochalimaea henselae)).